Consider the following 437-residue polypeptide: Phosphomethylpyrimidine synthase (437 aa).

Residues Asn69, Met98, Tyr127, His163, 185–187 (SRG), 226–229 (DALR), and Glu265 each bind substrate. His269 serves as a coordination point for Zn(2+). Substrate is bound at residue Tyr292. Zn(2+) is bound at residue His333. 3 residues coordinate [4Fe-4S] cluster: Cys409, Cys412, and Cys416.

Belongs to the ThiC family. It depends on [4Fe-4S] cluster as a cofactor.

It carries out the reaction 5-amino-1-(5-phospho-beta-D-ribosyl)imidazole + S-adenosyl-L-methionine = 4-amino-2-methyl-5-(phosphooxymethyl)pyrimidine + CO + 5'-deoxyadenosine + formate + L-methionine + 3 H(+). Its pathway is cofactor biosynthesis; thiamine diphosphate biosynthesis. In terms of biological role, catalyzes the synthesis of the hydroxymethylpyrimidine phosphate (HMP-P) moiety of thiamine from aminoimidazole ribotide (AIR) in a radical S-adenosyl-L-methionine (SAM)-dependent reaction. The polypeptide is Phosphomethylpyrimidine synthase (Alkaliphilus oremlandii (strain OhILAs) (Clostridium oremlandii (strain OhILAs))).